We begin with the raw amino-acid sequence, 210 residues long: 3-hydroxy-3-methylglutaryl-coenzyme A reductase 2 (210 aa).

Residues K21 and D97 each act as charge relay system in the active site. The chain crosses the membrane as a helical span at residues 166-186 (LLATIVAGSVLAGELSLMSAI). Catalysis depends on H195, which acts as the Proton donor. An N-linked (GlcNAc...) asparagine glycan is attached at N199.

Belongs to the HMG-CoA reductase family.

The protein resides in the endoplasmic reticulum membrane. The protein localises to the mitochondrion membrane. It is found in the plastid membrane. It catalyses the reaction (R)-mevalonate + 2 NADP(+) + CoA = (3S)-3-hydroxy-3-methylglutaryl-CoA + 2 NADPH + 2 H(+). It functions in the pathway metabolic intermediate biosynthesis; (R)-mevalonate biosynthesis; (R)-mevalonate from acetyl-CoA: step 3/3. Functionally, catalyzes the synthesis of mevalonate. The specific precursor of all isoprenoid compounds present in plants. This chain is 3-hydroxy-3-methylglutaryl-coenzyme A reductase 2 (HMGR2), found in Hevea brasiliensis (Para rubber tree).